An 88-amino-acid polypeptide reads, in one-letter code: MANTSSAKKATRKIARRTAVNKSRRTQMRGSVRTVEEAIASGDRDAAVKALANAEPALMRAAQRNIVHKNAASRKVSRLASRIAQLGK.

Residues 1-33 (MANTSSAKKATRKIARRTAVNKSRRTQMRGSVR) are disordered.

Belongs to the bacterial ribosomal protein bS20 family.

Functionally, binds directly to 16S ribosomal RNA. The sequence is that of Small ribosomal subunit protein bS20 from Rhodopseudomonas palustris (strain BisB5).